The following is a 666-amino-acid chain: Probable potassium transport system protein Kup (666 aa).

12 helical membrane-spanning segments follow: residues 16 to 36, 58 to 78, 100 to 120, 141 to 161, 165 to 185, 221 to 241, 253 to 273, 294 to 314, 343 to 363, 373 to 393, 399 to 419, and 424 to 444; these read GFII…LYTM, ISLI…LIAL, PWLI…GALT, IYQN…VLFG, FGTG…FSFL, IFIL…YSDL, WPFV…WILA, VYLV…LISG, LYIP…VLAF, YGLA…YYLI, PILA…FFLA, and FMHG…VMFI.

Belongs to the HAK/KUP transporter (TC 2.A.72) family.

It is found in the cell membrane. It catalyses the reaction K(+)(in) + H(+)(in) = K(+)(out) + H(+)(out). In terms of biological role, transport of potassium into the cell. Likely operates as a K(+):H(+) symporter. This chain is Probable potassium transport system protein Kup, found in Streptococcus pyogenes serotype M4 (strain MGAS10750).